The sequence spans 280 residues: Fructose-1,6-bisphosphatase class 1 (280 aa).

Glutamate 64, aspartate 83, leucine 85, and aspartate 86 together coordinate Mg(2+). Substrate is bound by residues 86-89 (DGSS), tyrosine 189, and lysine 220. Residue glutamate 226 coordinates Mg(2+).

The protein belongs to the FBPase class 1 family. Homotetramer. It depends on Mg(2+) as a cofactor.

It localises to the cytoplasm. It carries out the reaction beta-D-fructose 1,6-bisphosphate + H2O = beta-D-fructose 6-phosphate + phosphate. Its pathway is carbohydrate biosynthesis; gluconeogenesis. The polypeptide is Fructose-1,6-bisphosphatase class 1 (Campylobacter jejuni subsp. jejuni serotype O:6 (strain 81116 / NCTC 11828)).